Here is a 198-residue protein sequence, read N- to C-terminus: Recombination protein RecR (198 aa).

The C4-type zinc-finger motif lies at 57–72 (CRQCRTLSEEELCPQC). The region spanning 80–174 (SLLCVVEGPL…TLSRIAHGVP (95 aa)) is the Toprim domain.

Belongs to the RecR family.

Its function is as follows. May play a role in DNA repair. It seems to be involved in an RecBC-independent recombinational process of DNA repair. It may act with RecF and RecO. In Pseudomonas aeruginosa (strain LESB58), this protein is Recombination protein RecR.